The following is a 248-amino-acid chain: Glutathione S-transferase omega-2 (248 aa).

The GST N-terminal domain occupies 22–101 (GVIRIYSMRF…YLDDVFPGRK (80 aa)). The active-site Nucleophile is cysteine 32. Glutathione-binding positions include lysine 59, valine 72, and 85-86 (ES). The region spanning 106 to 231 (DPYERARQKM…IFLGFLNLYF (126 aa)) is the GST C-terminal domain.

Belongs to the GST superfamily. Omega family.

It carries out the reaction RX + glutathione = an S-substituted glutathione + a halide anion + H(+). The enzyme catalyses L-dehydroascorbate + 2 glutathione = glutathione disulfide + L-ascorbate. The catalysed reaction is methylarsonate + 2 glutathione + H(+) = methylarsonous acid + glutathione disulfide + H2O. Its function is as follows. Exhibits glutathione-dependent thiol transferase activity. Has high dehydroascorbate reductase activity and may contribute to the recycling of ascorbic acid. Participates in the biotransformation of inorganic arsenic and reduces monomethylarsonic acid (MMA). This chain is Glutathione S-transferase omega-2 (Gsto2), found in Rattus norvegicus (Rat).